The chain runs to 214 residues: Outer-membrane lipoprotein LolB (214 aa).

The signal sequence occupies residues Met1–Gly30. A lipid anchor (N-palmitoyl cysteine) is attached at Cys31. Residue Cys31 is the site of S-diacylglycerol cysteine attachment.

This sequence belongs to the LolB family. As to quaternary structure, monomer.

It is found in the cell outer membrane. Plays a critical role in the incorporation of lipoproteins in the outer membrane after they are released by the LolA protein. The sequence is that of Outer-membrane lipoprotein LolB from Chromohalobacter salexigens (strain ATCC BAA-138 / DSM 3043 / CIP 106854 / NCIMB 13768 / 1H11).